The following is an 856-amino-acid chain: Inactive rhomboid protein 1 (856 aa).

Positions 1 to 21 (MGEARRDSSSSLQHKKPPWLK) are disordered. Residues 1–412 (MGEARRDSSS…HRPFFTYWLT (412 aa)) lie on the Cytoplasmic side of the membrane. Phosphoserine occurs at positions 76 and 176. Thr180 and Thr183 each carry phosphothreonine. Ser391 carries the post-translational modification Phosphoserine. A helical membrane pass occupies residues 413–433 (FVHSLVTILAVCIYGVAPVGF). Over 434–656 (SQHETVDSVL…NPEVPDQFYR (223 aa)) the chain is Lumenal. Asn584 carries an N-linked (GlcNAc...) asparagine glycan. A helical membrane pass occupies residues 657–677 (LWLSLFLHAGVLHCLVSVCFQ). At 678–692 (MTVLRDLEKLAGWHR) the chain is on the cytoplasmic side. A helical membrane pass occupies residues 693-713 (IAIIYLLSGVTGNLASAIFLP). Topologically, residues 714-715 (YR) are lumenal. The chain crosses the membrane as a helical span at residues 716–736 (AEVGPAGSQFGILACLFVELF). Topologically, residues 737–747 (QSWQILARPWR) are cytoplasmic. A helical transmembrane segment spans residues 748-768 (AFFKLLAVVLFLFTFGLLPWI). The Lumenal segment spans residues 769–773 (DNFAH). The chain crosses the membrane as a helical span at residues 774 to 794 (ISGFISGLFLSFAFLPYISFG). Topologically, residues 795 to 804 (KFDLYRKRCQ) are cytoplasmic. A helical membrane pass occupies residues 805 to 825 (IIVFQLVFLGLLAGLVVLFYF). Residues 826–856 (YPVRCEWCEFLTCIPFTDKFCEKYELDAQLH) are Lumenal-facing.

This sequence belongs to the peptidase S54 family. In terms of assembly, homodimer, or homooligomer. Interacts with TGFA and HBEGF. Interacts with EGF; may retain EGF in the endoplasmic reticulum and regulates its degradation through the endoplasmic reticulum-associated degradation (ERAD). Interacts (via cytoplasmic N-terminus) with FRMD8/iTAP; this interaction leads to mutual protein stabilization. Interacts with ADAM17/TACE.

It localises to the endoplasmic reticulum membrane. The protein resides in the golgi apparatus membrane. Functionally, regulates ADAM17 protease, a sheddase of the epidermal growth factor (EGF) receptor ligands and TNF, thereby plays a role in sleep, cell survival, proliferation, migration and inflammation. Does not exhibit any protease activity on its own. In Bos taurus (Bovine), this protein is Inactive rhomboid protein 1 (RHBDF1).